A 134-amino-acid polypeptide reads, in one-letter code: NADH-quinone oxidoreductase subunit A (134 aa).

Transmembrane regions (helical) follow at residues 14 to 34 (FFMF…LSWI), 66 to 86 (FYLI…LYAW), and 96 to 116 (IGFS…FYLV).

This sequence belongs to the complex I subunit 3 family. NDH-1 is composed of 13 different subunits. Subunits NuoA, H, J, K, L, M, N constitute the membrane sector of the complex.

It is found in the cell membrane. The catalysed reaction is a quinone + NADH + 5 H(+)(in) = a quinol + NAD(+) + 4 H(+)(out). NDH-1 shuttles electrons from NADH, via FMN and iron-sulfur (Fe-S) centers, to quinones in the respiratory chain. The immediate electron acceptor for the enzyme in this species is believed to be ubiquinone. Couples the redox reaction to proton translocation (for every two electrons transferred, four hydrogen ions are translocated across the cytoplasmic membrane), and thus conserves the redox energy in a proton gradient. This is NADH-quinone oxidoreductase subunit A from Buchnera aphidicola subsp. Acyrthosiphon pisum (strain APS) (Acyrthosiphon pisum symbiotic bacterium).